A 204-amino-acid polypeptide reads, in one-letter code: Transmembrane protein 186 (204 aa).

Residues 1-69 are Mitochondrial matrix-facing; it reads MLELLCRVSP…RLVAALSRLK (69 aa). A helical transmembrane segment spans residues 70-90; it reads VYQAVITAAGTPIVFALGSAG. The Mitochondrial intermembrane segment spans residues 91–95; the sequence is QLSTD. A helical transmembrane segment spans residues 96–116; the sequence is ALAIYAAIGVTGLITLTLASY. Topologically, residues 117 to 204 are mitochondrial matrix; sequence ASSNLVGFIY…RQLFEGLFGN (88 aa).

Belongs to the TMEM186 family. Associates with mitochondrial complex I assembly intermediates during its biogenesis.

It localises to the mitochondrion inner membrane. Its function is as follows. As part of the MCIA complex, required for efficient assembly of the mitochondrial complex I. The sequence is that of Transmembrane protein 186 from Drosophila melanogaster (Fruit fly).